The primary structure comprises 156 residues: Small ribosomal subunit protein uS7 (156 aa).

The protein belongs to the universal ribosomal protein uS7 family. In terms of assembly, part of the 30S ribosomal subunit. Contacts proteins S9 and S11.

Its function is as follows. One of the primary rRNA binding proteins, it binds directly to 16S rRNA where it nucleates assembly of the head domain of the 30S subunit. Is located at the subunit interface close to the decoding center, probably blocks exit of the E-site tRNA. In Mycolicibacterium smegmatis (strain ATCC 700084 / mc(2)155) (Mycobacterium smegmatis), this protein is Small ribosomal subunit protein uS7.